We begin with the raw amino-acid sequence, 604 residues long: UvrABC system protein C (604 aa).

In terms of domain architecture, GIY-YIG spans 10–89; sequence ELPGVYLMKD…VKKNRPHYNI (80 aa). The UVR domain maps to 199–234; it reads SGTIKELQEKMNIHAIAQEYESAAVIRDQIDALKSL.

Belongs to the UvrC family. In terms of assembly, interacts with UvrB in an incision complex.

The protein localises to the cytoplasm. Its function is as follows. The UvrABC repair system catalyzes the recognition and processing of DNA lesions. UvrC both incises the 5' and 3' sides of the lesion. The N-terminal half is responsible for the 3' incision and the C-terminal half is responsible for the 5' incision. This is UvrABC system protein C from Methanococcoides burtonii (strain DSM 6242 / NBRC 107633 / OCM 468 / ACE-M).